Here is a 414-residue protein sequence, read N- to C-terminus: Cyclin-B1-3 (414 aa).

Belongs to the cyclin family. Cyclin AB subfamily. In terms of tissue distribution, expressed in roots, stems and flowers.

This is Cyclin-B1-3 (CYCB1-3) from Arabidopsis thaliana (Mouse-ear cress).